Consider the following 243-residue polypeptide: Exosome complex component Rrp41 (243 aa).

The protein belongs to the RNase PH family. Rrp41 subfamily. In terms of assembly, component of the archaeal exosome complex. Forms a hexameric ring-like arrangement composed of 3 Rrp41-Rrp42 heterodimers. The hexameric ring associates with a trimer of Rrp4 and/or Csl4 subunits.

It localises to the cytoplasm. In terms of biological role, catalytic component of the exosome, which is a complex involved in RNA degradation. Has 3'-&gt;5' exoribonuclease activity. Can also synthesize heteromeric RNA-tails. The protein is Exosome complex component Rrp41 of Cenarchaeum symbiosum (strain A).